Reading from the N-terminus, the 587-residue chain is Inorganic phosphate transporter 2-1, chloroplastic (587 aa).

A chloroplast-targeting transit peptide spans 1–71; it reads MTLPYRFSSV…VCPLASFSSY (71 aa). The interval 74–106 is disordered; the sequence is SEGEEQHHADQPIQNPHESSTVSNESDGKGNAE. The segment covering 85-98 has biased composition (polar residues); the sequence is PIQNPHESSTVSNE. The next 12 helical transmembrane spans lie at 127-147, 154-174, 195-215, 233-253, 265-285, 289-309, 327-347, 352-372, 413-433, 465-485, 523-543, and 559-579; these read AISI…KSLG, TKLL…NIGA, AVMT…THVT, MLLF…LQVA, CIVG…AVFW, AKVA…SFLV, AAAA…SAAL, IFPI…IVFD, LEIV…FMSF, IVIP…GLTM, LGLP…VGFA, and ASWL…TWIF.

The protein belongs to the inorganic phosphate transporter (PiT) (TC 2.A.20.2) family. As to expression, mostly expressed in young green tissues. Present in both auto- and heterotrophic tissues. Also expressed in root stele.

It is found in the plastid. The protein localises to the chloroplast inner membrane. Functionally, low affinity H(+)/Pi chloroplastic cotransporter. Involved in inorganic phosphate (orthophosphate, Pi) uptake in green parts of plants in Pi-sufficient conditions. Required for Pi retranslocation during Pi deprivation. This chain is Inorganic phosphate transporter 2-1, chloroplastic (PHT2-1), found in Arabidopsis thaliana (Mouse-ear cress).